Consider the following 336-residue polypeptide: Ribosomal RNA large subunit methyltransferase F (336 aa).

Residues 1 to 24 (MPRPTSPHPDAERKSASPLHPRNR) are disordered.

Belongs to the methyltransferase superfamily. METTL16/RlmF family.

It is found in the cytoplasm. The catalysed reaction is adenosine(1618) in 23S rRNA + S-adenosyl-L-methionine = N(6)-methyladenosine(1618) in 23S rRNA + S-adenosyl-L-homocysteine + H(+). In terms of biological role, specifically methylates the adenine in position 1618 of 23S rRNA. This chain is Ribosomal RNA large subunit methyltransferase F, found in Pseudomonas aeruginosa (strain LESB58).